The following is a 379-amino-acid chain: Chaperone protein DnaJ (379 aa).

The J domain occupies Glu5–Gly69. A CR-type zinc finger spans residues Gly141 to Ala223. Zn(2+) contacts are provided by Cys154, Cys157, Cys171, Cys174, Cys197, Cys200, Cys211, and Cys214. CXXCXGXG motif repeat units follow at residues Cys154–Gly161, Cys171–Gly178, Cys197–Gly204, and Cys211–Gly218.

This sequence belongs to the DnaJ family. Homodimer. Zn(2+) is required as a cofactor.

It is found in the cytoplasm. Its function is as follows. Participates actively in the response to hyperosmotic and heat shock by preventing the aggregation of stress-denatured proteins and by disaggregating proteins, also in an autonomous, DnaK-independent fashion. Unfolded proteins bind initially to DnaJ; upon interaction with the DnaJ-bound protein, DnaK hydrolyzes its bound ATP, resulting in the formation of a stable complex. GrpE releases ADP from DnaK; ATP binding to DnaK triggers the release of the substrate protein, thus completing the reaction cycle. Several rounds of ATP-dependent interactions between DnaJ, DnaK and GrpE are required for fully efficient folding. Also involved, together with DnaK and GrpE, in the DNA replication of plasmids through activation of initiation proteins. The chain is Chaperone protein DnaJ from Lactococcus lactis subsp. cremoris (strain MG1363).